The following is a 185-amino-acid chain: N-alpha-acetyltransferase 30 (185 aa).

The region spanning 31–179 is the N-acetyltransferase domain; it reads IEYIPYQGES…DAVRLLLPLN (149 aa).

This sequence belongs to the acetyltransferase family. MAK3 subfamily.

Functionally, probable catalytic component of a complex displaying alpha (N-terminal) acetyltransferase activity. The polypeptide is N-alpha-acetyltransferase 30 (Dictyostelium discoideum (Social amoeba)).